A 917-amino-acid chain; its full sequence is Chitin synthase 1 (917 aa).

Over residues 1–11 (MAYHGRGDGYD) the composition is skewed to basic and acidic residues. The segment at 1 to 56 (MAYHGRGDGYDGHQLQDLPGGHNQGDQHDDAQAPFLSENPMPYDNDRLGTDTPPVR) is disordered. Residues 1–570 (MAYHGRGDGY…YKSGHNIVRM (570 aa)) are Extracellular-facing. The N-linked (GlcNAc...) asparagine glycan is linked to N544. Residues 571 to 591 (FFFHVQLIYNIANVIFTWFSL) form a helical membrane-spanning segment. The Cytoplasmic segment spans residues 592–629 (ASYWLTTTVIMDLVGTPVTASSSSAEHHGWPFGDTVTP). The chain crosses the membrane as a helical span at residues 630 to 650 (FFNAVLKYIYLAFVILQFILA). The Extracellular segment spans residues 651-664 (LGNRPKGSKWTYIT). Residues 665 to 685 (SFFVFSLIQSYILVLSGYLVA) traverse the membrane as a helical segment. Over 686 to 716 (RAFSVPLDQQLQLDNAKDAMASLFGGSGSAG) the chain is Cytoplasmic. The chain crosses the membrane as a helical span at residues 717 to 737 (VILVALVTIYGLYFLASFMYL). The Extracellular segment spans residues 738 to 744 (DPWHMFH). A helical transmembrane segment spans residues 745–765 (SFPYYMLLMSTYINILMIYAF). The Cytoplasmic portion of the chain corresponds to 766–843 (NNWHDVSWGT…DLEDSYKSFR (78 aa)). The chain crosses the membrane as a helical span at residues 844–864 (TMLVVSWLFSNCLLAVVITSD). The Extracellular segment spans residues 865 to 884 (NFNTFGIGQTASARTAWFFK). Residues 885–905 (FLLFATGALSVIRFIGFCWFL) traverse the membrane as a helical segment. At 906-917 (GRTGIMCCFARR) the chain is on the cytoplasmic side.

The protein belongs to the chitin synthase family. Class III subfamily.

It is found in the cell membrane. The catalysed reaction is [(1-&gt;4)-N-acetyl-beta-D-glucosaminyl](n) + UDP-N-acetyl-alpha-D-glucosamine = [(1-&gt;4)-N-acetyl-beta-D-glucosaminyl](n+1) + UDP + H(+). In terms of biological role, polymerizes chitin, a structural polymer of the cell wall and septum, by transferring the sugar moiety of UDP-GlcNAc to the non-reducing end of the growing chitin polymer. This Neurospora crassa (strain ATCC 24698 / 74-OR23-1A / CBS 708.71 / DSM 1257 / FGSC 987) protein is Chitin synthase 1 (chs-1).